Here is a 243-residue protein sequence, read N- to C-terminus: Adenosine 5'-phosphosulfate reductase (243 aa).

4 residues coordinate [4Fe-4S] cluster: Cys-126, Cys-127, Cys-209, and Cys-212. Cys-235 functions as the Nucleophile; cysteine thiosulfonate intermediate in the catalytic mechanism.

The protein belongs to the PAPS reductase family. CysH subfamily. It depends on [4Fe-4S] cluster as a cofactor.

It is found in the cytoplasm. The enzyme catalyses [thioredoxin]-disulfide + sulfite + AMP + 2 H(+) = adenosine 5'-phosphosulfate + [thioredoxin]-dithiol. It participates in sulfur metabolism; hydrogen sulfide biosynthesis; sulfite from sulfate. In terms of biological role, catalyzes the formation of sulfite from adenosine 5'-phosphosulfate (APS) using thioredoxin as an electron donor. This chain is Adenosine 5'-phosphosulfate reductase, found in Staphylococcus epidermidis (strain ATCC 35984 / DSM 28319 / BCRC 17069 / CCUG 31568 / BM 3577 / RP62A).